The following is a 397-amino-acid chain: Succinyl-diaminopimelate desuccinylase (397 aa).

H73 is a Zn(2+) binding site. Residue D75 is part of the active site. D106 is a Zn(2+) binding site. The active-site Proton acceptor is the E140. E141, E169, and H366 together coordinate Zn(2+).

This sequence belongs to the peptidase M20A family. DapE subfamily. In terms of assembly, homodimer. Zn(2+) is required as a cofactor. Co(2+) serves as cofactor.

The catalysed reaction is N-succinyl-(2S,6S)-2,6-diaminopimelate + H2O = (2S,6S)-2,6-diaminopimelate + succinate. Its pathway is amino-acid biosynthesis; L-lysine biosynthesis via DAP pathway; LL-2,6-diaminopimelate from (S)-tetrahydrodipicolinate (succinylase route): step 3/3. In terms of biological role, catalyzes the hydrolysis of N-succinyl-L,L-diaminopimelic acid (SDAP), forming succinate and LL-2,6-diaminopimelate (DAP), an intermediate involved in the bacterial biosynthesis of lysine and meso-diaminopimelic acid, an essential component of bacterial cell walls. The protein is Succinyl-diaminopimelate desuccinylase of Rhizobium etli (strain ATCC 51251 / DSM 11541 / JCM 21823 / NBRC 15573 / CFN 42).